A 718-amino-acid chain; its full sequence is MAEVDKSISFDGRDIRLKVGLLAPQAGGSVLIESGDTSVLVTATRSQAREGIDFLPLTVDYEERLYAAGRIPGGIMRREGRPPEKTILTSRLIDRPMRPLFPSWLRDDLQIIALTLSMDELVPPDVLAVTGASIATLIAQIPFNGPMAAVRVGLVGDDFIINPTYAEIEAGDLDLVVAGSPHGVIMVEAGANQLPERDIIEAIDFGYEAVRDLIKAQQDLVAELGLVIVQEAPPEVDQTLENYIRDRASGQIKKILSQFTFTKPERDAALDVVKDEIATTIKELPEEDPIRVAATANNKALGNTFKDITKYFMRRQIIEDNVRVDGRKLDEVRRVSCLVGVLPKRVHGSGLFNRELTQVLSTCTLGTPGDAQNLNDDMQLDQHKRYLHHYNFPPFSVGETKPMRSPGRREIGHGALAERSLIPVLPSKEQFPYVIRIVSEVLSSNGSTSMGSVCGSTLALMDAGVPILKPVSGAAMGLIKDGDEVRILTDIQGIEDFLGDMDFKVAGTDTGITALQMDMKIPGLSLDVISQAVHQAKAARLHILEKMLACIDTPRIETSPYAPRLLTIKIDSDMIGLVIGPGGKTIKGITEETGAKIDIEDDGTVTISAVDENKAKRARNIIQGMTRKLHEGDVYAGRITRIIPIGAFVEFLPGKEGMIHISQLADYRVGKVEDEVAVGDEVIIKVREIDNKGRINLTRLGIHPDQAAAAREAAAVNR.

D496 and D502 together coordinate Mg(2+). The 60-residue stretch at 563 to 622 folds into the KH domain; that stretch reads PRLLTIKIDSDMIGLVIGPGGKTIKGITEETGAKIDIEDDGTVTISAVDENKAKRARNII. One can recognise an S1 motif domain in the interval 632 to 700; the sequence is GDVYAGRITR…NKGRINLTRL (69 aa).

Belongs to the polyribonucleotide nucleotidyltransferase family. Requires Mg(2+) as cofactor.

The protein resides in the cytoplasm. It carries out the reaction RNA(n+1) + phosphate = RNA(n) + a ribonucleoside 5'-diphosphate. In terms of biological role, involved in mRNA degradation. Catalyzes the phosphorolysis of single-stranded polyribonucleotides processively in the 3'- to 5'-direction. This is Polyribonucleotide nucleotidyltransferase from Nostoc punctiforme (strain ATCC 29133 / PCC 73102).